Consider the following 818-residue polypeptide: Serine/threonine-protein phosphatase 4 regulatory subunit 3 (818 aa).

The WH1 domain maps to 1–100; the sequence is MTDTRRRVKV…DEIWEKICQV (100 aa). The segment covering 670-681 has biased composition (acidic residues); the sequence is FNTDEEDLEDGE. A disordered region spans residues 670 to 818; sequence FNTDEEDLED…PLSKKSKLSS (149 aa). A compositionally biased stretch (basic and acidic residues) spans 703–718; the sequence is FMERKKLKDSEEKEVL. The segment covering 729–775 has biased composition (low complexity); sequence SPSFKLSFSSSPKASLSSPPTASLHPGSPGSPSSPGTGARSSPPSAA. Residues S769 and S770 each carry the phosphoserine modification. The span at 788 to 803 shows a compositional bias: acidic residues; that stretch reads YPDDDEEDEDEEDADS.

This sequence belongs to the SMEK family. As to quaternary structure, serine/threonine-protein phosphatase 4 (PP4) occurs in different assemblies of the catalytic and one or more regulatory subunits.

In terms of biological role, regulatory subunit of serine/threonine-protein phosphatase 4. In Danio rerio (Zebrafish), this protein is Serine/threonine-protein phosphatase 4 regulatory subunit 3 (smek1).